The primary structure comprises 432 residues: UDP-N-acetylmuramate--L-alanine ligase (432 aa).

109 to 115 (GAHGKST) provides a ligand contact to ATP.

Belongs to the MurCDEF family.

It is found in the cytoplasm. It catalyses the reaction UDP-N-acetyl-alpha-D-muramate + L-alanine + ATP = UDP-N-acetyl-alpha-D-muramoyl-L-alanine + ADP + phosphate + H(+). It participates in cell wall biogenesis; peptidoglycan biosynthesis. Functionally, cell wall formation. The chain is UDP-N-acetylmuramate--L-alanine ligase from Campylobacter jejuni subsp. jejuni serotype O:2 (strain ATCC 700819 / NCTC 11168).